A 2320-amino-acid chain; its full sequence is Bromodomain and WD repeat-containing protein 1 (2320 aa).

WD repeat units lie at residues 184–223 (GHLS…LLST), 226–265 (GHSA…PVAV), 268–311 (GHTG…LKFS), 322–365 (RPGV…AELE), 366–405 (SHTD…WRSI), 424–463 (FMKP…LLHN), 466–506 (GHAD…KMKH), and 514–553 (QGHG…PYEK). The tract at residues 668 to 691 (QRMGADQDTIPRGLSNGEETPRRG) is disordered. The residue at position 687 (Thr687) is a Phosphothreonine. 3 positions are modified to phosphoserine: Ser696, Ser701, and Ser710. Disordered stretches follow at residues 809 to 867 (NRSW…RYSD) and 895 to 925 (SEDE…ENLR). 2 stretches are compositionally biased toward low complexity: residues 814–824 (ELSSGNESSSS) and 854–867 (YSES…RYSD). Over residues 907 to 918 (PKRRRKRKKENK) the composition is skewed to basic residues. In terms of domain architecture, Bromo 1 spans 1157-1264 (WGQKSRDEEC…DQLLKFIKNQ (108 aa)). Positions 1271–1304 (ELSNTSENDEQNAEDLDDSDLPKTSSGRRRVHDG) are disordered. Residues 1277–1289 (ENDEQNAEDLDDS) are compositionally biased toward acidic residues. At Ser1289 the chain carries Phosphoserine. A Bromo 2 domain is found at 1313 to 1418 (YVESNWKKQC…ALFEEKMKKI (106 aa)). Positions 1434 to 1593 (RSQRFKQRQN…TGPVSLANGC (160 aa)) are disordered. Polar residues predominate over residues 1443–1454 (NCKGDSQPNKSI). The span at 1455-1464 (RNLKPKRLKS) shows a compositional bias: basic residues. Position 1475 is a phosphoserine (Ser1475). A compositionally biased stretch (polar residues) spans 1475–1496 (SPTQSTSSRTAYLGTHKTSAGI). Thr1477 is subject to Phosphothreonine. At Ser1479 the chain carries Phosphoserine. Low complexity predominate over residues 1497–1509 (SSGVTSGDSSDSA). Over residues 1520–1529 (PITNGSTLSE) the composition is skewed to polar residues. Positions 1535 to 1548 (SLATSLSSSASSSS) are enriched in low complexity. Positions 1549–1561 (EESKESSRARESS) are enriched in basic and acidic residues. 5 positions are modified to phosphoserine: Ser1605, Ser1607, Ser1678, Ser1683, and Ser1686. Disordered stretches follow at residues 1670 to 1805 (ARKK…KYNT), 1817 to 1839 (KILS…KCHK), and 1862 to 1899 (DHGC…KISR). The span at 1676–1687 (HNSEDEQSLKSE) shows a compositional bias: basic and acidic residues. Polar residues predominate over residues 1701–1712 (PVSSSHTAQSNV). Basic and acidic residues-rich tracts occupy residues 1715–1728 (SENR…DLRV) and 1751–1769 (LKIE…DHAC). Ser1755, Ser1756, Ser1786, Ser1788, Ser1793, and Ser1820 each carry phosphoserine. Acidic residues predominate over residues 1821–1832 (DSEDSESEEQDR). Thr1867 is modified (phosphothreonine). Ser1871, Ser1904, Ser1905, Ser1907, Ser1910, and Ser1943 each carry phosphoserine. At Thr1955 the chain carries Phosphothreonine. Disordered regions lie at residues 2014–2077 (LNGD…TLAQ) and 2112–2184 (TKVI…TKGK). Ser2018, Ser2020, and Ser2052 each carry phosphoserine. Basic and acidic residues-rich tracts occupy residues 2054–2069 (EDSK…DRTF) and 2114–2139 (VIHD…ENVK). Residues 2140–2165 (ISETTGNSKFRPDTSSKSSDLGSVTE) are compositionally biased toward polar residues. Thr2164 is modified (phosphothreonine). 2 positions are modified to phosphoserine: Ser2166 and Val2214.

In terms of assembly, interacts with SMARCA4. In terms of tissue distribution, ubiquitously expressed. Expressed in respiratory epithelial cells and testis spermatozoa.

The protein resides in the cytoplasm. It is found in the nucleus. It localises to the cell projection. Its subcellular location is the cilium membrane. The protein localises to the cytoskeleton. The protein resides in the flagellum axoneme. Its function is as follows. May be a transcriptional activator. May be involved in chromatin remodeling. Plays a role in the regulation of cell morphology and cytoskeletal organization. Required in the control of cell shape. In Homo sapiens (Human), this protein is Bromodomain and WD repeat-containing protein 1 (BRWD1).